The primary structure comprises 79 residues: Large ribosomal subunit protein uL24 (79 aa).

It belongs to the universal ribosomal protein uL24 family. In terms of assembly, part of the 50S ribosomal subunit.

Its function is as follows. One of two assembly initiator proteins, it binds directly to the 5'-end of the 23S rRNA, where it nucleates assembly of the 50S subunit. In terms of biological role, one of the proteins that surrounds the polypeptide exit tunnel on the outside of the subunit. This chain is Large ribosomal subunit protein uL24, found in Lactobacillus gasseri (strain ATCC 33323 / DSM 20243 / BCRC 14619 / CIP 102991 / JCM 1131 / KCTC 3163 / NCIMB 11718 / NCTC 13722 / AM63).